Here is a 222-residue protein sequence, read N- to C-terminus: UPF0758 protein Cpar_0627 (222 aa).

Residues 100-222 (KIQGAQDVFE…WFSFRDHSLL (123 aa)) enclose the MPN domain. Zn(2+) contacts are provided by H171, H173, and D184. The JAMM motif signature appears at 171–184 (HNHPSGDVQPSNAD).

Belongs to the UPF0758 family.

The protein is UPF0758 protein Cpar_0627 of Chlorobaculum parvum (strain DSM 263 / NCIMB 8327) (Chlorobium vibrioforme subsp. thiosulfatophilum).